A 141-amino-acid polypeptide reads, in one-letter code: MGNKESKYLEMCSEEAWLNIPNIFKCIFIRKLFYNKWLKYQEKKLKKSLKLLSFYHPKKDFVGIRDMLHMAPGGSYFITDNITEEFLMLVVKHPEDGSAEFTKLCLKGSCIVIDGYYYDTLHIFLSETPDIYKYPLIRYDR.

It belongs to the asfivirus MGF 100 family.

Its function is as follows. Plays a role in virus cell tropism, and may be required for efficient virus replication in macrophages. This chain is Protein MGF 100-2L, found in African swine fever virus (strain Badajoz 1971 Vero-adapted) (Ba71V).